A 287-amino-acid polypeptide reads, in one-letter code: 33 kDa chaperonin (287 aa).

2 cysteine pairs are disulfide-bonded: cysteine 233–cysteine 235 and cysteine 266–cysteine 269.

This sequence belongs to the HSP33 family. Post-translationally, under oxidizing conditions two disulfide bonds are formed involving the reactive cysteines. Under reducing conditions zinc is bound to the reactive cysteines and the protein is inactive.

It is found in the cytoplasm. Redox regulated molecular chaperone. Protects both thermally unfolding and oxidatively damaged proteins from irreversible aggregation. Plays an important role in the bacterial defense system toward oxidative stress. The sequence is that of 33 kDa chaperonin from Thermodesulfovibrio yellowstonii (strain ATCC 51303 / DSM 11347 / YP87).